The sequence spans 156 residues: MVEKIPMTASGYKKLEDELSTLKVKRIDVIEEMRLAAMDKDMRENAPYHAAKEQRGQIEGRIKEIEHELKYADVSEYTDTNTSKVNMGSTVKLRDPKNGECCTYTLVSPKEIEPLKGKISASSPIGKAVFNRNKGEQIEIEVPSGTLQYIIEDISF.

Residues 12–72 (YKKLEDELST…KEIEHELKYA (61 aa)) adopt a coiled-coil conformation.

Belongs to the GreA/GreB family.

Necessary for efficient RNA polymerase transcription elongation past template-encoded arresting sites. The arresting sites in DNA have the property of trapping a certain fraction of elongating RNA polymerases that pass through, resulting in locked ternary complexes. Cleavage of the nascent transcript by cleavage factors such as GreA or GreB allows the resumption of elongation from the new 3'terminus. GreA releases sequences of 2 to 3 nucleotides. The chain is Transcription elongation factor GreA from Dehalococcoides mccartyi (strain ATCC BAA-2266 / KCTC 15142 / 195) (Dehalococcoides ethenogenes (strain 195)).